A 63-amino-acid polypeptide reads, in one-letter code: Prokaryotic ubiquitin-like protein Pup (63 aa).

A compositionally biased stretch (basic and acidic residues) spans 1 to 11; the sequence is MAQEQTRRGGG. The segment at 1-36 is disordered; that stretch reads MAQEQTRRGGGGDDDEFTSSTSVGQERREKLTEETD. The segment at 20–57 is ARC ATPase binding; that stretch reads STSVGQERREKLTEETDDLLDEIDDVLEENAEDFVRAY. Residues 23–51 adopt a coiled-coil conformation; that stretch reads VGQERREKLTEETDDLLDEIDDVLEENAE. Q63 carries the post-translational modification Deamidated glutamine. An Isoglutamyl lysine isopeptide (Gln-Lys) (interchain with K-? in acceptor proteins) cross-link involves residue Q63.

The protein belongs to the prokaryotic ubiquitin-like protein family. In terms of assembly, strongly interacts with the proteasome-associated ATPase ARC through a hydrophobic interface; the interacting region of Pup lies in its C-terminal half. There is one Pup binding site per ARC hexamer ring. In terms of processing, is modified by deamidation of its C-terminal glutamine to glutamate by the deamidase Dop, a prerequisite to the subsequent pupylation process.

It functions in the pathway protein degradation; proteasomal Pup-dependent pathway. In terms of biological role, protein modifier that is covalently attached to lysine residues of substrate proteins, thereby targeting them for proteasomal degradation. The tagging system is termed pupylation. The sequence is that of Prokaryotic ubiquitin-like protein Pup from Mycobacterium leprae (strain Br4923).